We begin with the raw amino-acid sequence, 158 residues long: Putative metalloproteinase inhibitor tag-225 (158 aa).

Positions Met1–Ala20 are cleaved as a signal peptide. Cys21 is a binding site for Zn(2+). The tract at residues Cys21–Glu25 is involved in metalloproteinase-binding. Disulfide bonds link Cys21-Cys96, Cys23-Cys123, and Cys33-Cys158. Residues Cys21–Cys158 enclose the NTR domain. Residue Asn79 is glycosylated (N-linked (GlcNAc...) asparagine). Residues Ala93–Pro94 form an involved in metalloproteinase-binding region.

Belongs to the protease inhibitor I35 (TIMP) family.

The protein localises to the secreted. Complexes with metalloproteinases and irreversibly inactivates them by binding to their catalytic zinc cofactor. The chain is Putative metalloproteinase inhibitor tag-225 (tag-225) from Caenorhabditis elegans.